An 828-amino-acid polypeptide reads, in one-letter code: DNA gyrase subunit A (828 aa).

In terms of domain architecture, Topo IIA-type catalytic spans 32 to 497 (LPDVRDGLKP…EVLSLEDEDL (466 aa)). The O-(5'-phospho-DNA)-tyrosine intermediate role is filled by tyrosine 120. Positions 524-530 (QKRGGRG) match the GyrA-box motif.

This sequence belongs to the type II topoisomerase GyrA/ParC subunit family. Heterotetramer, composed of two GyrA and two GyrB chains. In the heterotetramer, GyrA contains the active site tyrosine that forms a transient covalent intermediate with DNA, while GyrB binds cofactors and catalyzes ATP hydrolysis.

The protein localises to the cytoplasm. The enzyme catalyses ATP-dependent breakage, passage and rejoining of double-stranded DNA.. Its function is as follows. A type II topoisomerase that negatively supercoils closed circular double-stranded (ds) DNA in an ATP-dependent manner to modulate DNA topology and maintain chromosomes in an underwound state. Negative supercoiling favors strand separation, and DNA replication, transcription, recombination and repair, all of which involve strand separation. Also able to catalyze the interconversion of other topological isomers of dsDNA rings, including catenanes and knotted rings. Type II topoisomerases break and join 2 DNA strands simultaneously in an ATP-dependent manner. The polypeptide is DNA gyrase subunit A (Streptococcus pyogenes serotype M6 (strain ATCC BAA-946 / MGAS10394)).